Consider the following 74-residue polypeptide: UPF0741 protein BcerKBAB4_5177 (74 aa).

This sequence belongs to the UPF0741 family.

This chain is UPF0741 protein BcerKBAB4_5177, found in Bacillus mycoides (strain KBAB4) (Bacillus weihenstephanensis).